The chain runs to 711 residues: Polyribonucleotide nucleotidyltransferase (711 aa).

Residues Asp-494 and Asp-500 each contribute to the Mg(2+) site. The 61-residue stretch at 560 to 620 (PKIEIFGVDP…INVENAKSDI (61 aa)) folds into the KH domain. In terms of domain architecture, S1 motif spans 651 to 710 (GEEFDGVVKKIMDFGAFISLKDGIDGLLHVSKIKTQLSEGDTLRVKVEEIKRGKISLELC).

The protein belongs to the polyribonucleotide nucleotidyltransferase family. Mg(2+) serves as cofactor.

It is found in the cytoplasm. The enzyme catalyses RNA(n+1) + phosphate = RNA(n) + a ribonucleoside 5'-diphosphate. In terms of biological role, involved in mRNA degradation. Catalyzes the phosphorolysis of single-stranded polyribonucleotides processively in the 3'- to 5'-direction. This chain is Polyribonucleotide nucleotidyltransferase, found in Campylobacter hominis (strain ATCC BAA-381 / DSM 21671 / CCUG 45161 / LMG 19568 / NCTC 13146 / CH001A).